The primary structure comprises 597 residues: Formate--tetrahydrofolate ligase (597 aa).

84–91 (TPLGEGKS) provides a ligand contact to ATP.

The protein belongs to the formate--tetrahydrofolate ligase family.

The enzyme catalyses (6S)-5,6,7,8-tetrahydrofolate + formate + ATP = (6R)-10-formyltetrahydrofolate + ADP + phosphate. It functions in the pathway one-carbon metabolism; tetrahydrofolate interconversion. The chain is Formate--tetrahydrofolate ligase from Dehalococcoides mccartyi (strain CBDB1).